We begin with the raw amino-acid sequence, 142 residues long: Organic hydroperoxide resistance protein-like 2 (142 aa).

It belongs to the OsmC/Ohr family.

This chain is Organic hydroperoxide resistance protein-like 2, found in Staphylococcus epidermidis (strain ATCC 12228 / FDA PCI 1200).